Reading from the N-terminus, the 793-residue chain is E3 UFM1-protein ligase 1 (793 aa).

Ala2 bears the N-acetylalanine mark. Positions 2–200 (ADAWEEIRRL…RGLFSAITRP (199 aa)) are mediates interaction with DDRGK1. The interval 2 to 212 (ADAWEEIRRL…VNSLISKYGF (211 aa)) is required for E3 UFM1-protein ligase activity. Residues 121-250 (DRLAEEVNDK…KAVFVPDIYS (130 aa)) are involved in CDK5RAP3-binding. The mediates interaction with TRIP4 stretch occupies residues 200 to 400 (PTAVNSLISK…NPVHLITEED (201 aa)). The interval 407 to 473 (LESVSTSKKD…SSHTGKKKPE (67 aa)) is disordered. At Arg433 the chain carries Omega-N-methylarginine. Ser458 is subject to Phosphoserine. The interval 490–684 (IQDAPEEFIS…QLKVTEDPAL (195 aa)) is mediates interaction with CDK5RAP3. Thr536 carries the phosphothreonine modification.

The protein belongs to the UFL1 family. In terms of assembly, catalytic component of the UFM1 ribosome E3 ligase (UREL) complex, composed of UFL1, DDRGK1 and CDK5RAP3. Interacts with E2-like enzyme UFC1. Interacts with RELA. Interacts with NBN; promoting recruitment to double-strand breaks following DNA damage. Interacts (when phosphorylated) with YWHAG/14-3-3-gamma; sequestering UFL1 and preventing its association with PDCD1/PD-1 substrate. In terms of processing, ubiquitinated, leading to its degradation by the proteasome. Interaction with CDK5RAP3 protects both proteins against ubiquitination and degradation via the proteasome. Post-translationally, phosphorylation at Thr-536 by AMPK promotes its interaction with YWHAG/14-3-3-gamma, thereby preventing UFL1 association with PDCD1/PD-1 substrate.

It is found in the endoplasmic reticulum membrane. The protein resides in the cytoplasm. It localises to the cytosol. Its subcellular location is the nucleus. The protein localises to the chromosome. Functionally, E3 protein ligase that mediates ufmylation, the covalent attachment of the ubiquitin-like modifier UFM1 to lysine residues on target proteins, and which plays a key role in various processes, such as ribosome recycling, response to DNA damage, interferon response or reticulophagy (also called ER-phagy). Catalyzes ufmylation of many protein, such as CD274/PD-L1, CDK5RAP3, CYB5R3, DDRGK1, EIF6, histone H4, MRE11, P4HB, PDCD1/PD-1, TRIP4, RPN1, RPS20/uS10, RPL10/uL16, RPL26/uL24, SYVN1/HRD1 and TP53/p53. As part of the UREL complex, plays a key role in ribosome recycling by catalyzing mono-ufmylation of RPL26/uL24 subunit of the 60S ribosome. Ufmylation of RPL26/uL24 occurs on free 60S ribosomes following ribosome dissociation: it weakens the junction between post-termination 60S subunits and SEC61 translocons, promoting release and recycling of the large ribosomal subunit from the endoplasmic reticulum membrane. Ufmylation of RPL26/uL24 and subsequent 60S ribosome recycling either take place after normal termination of translation or after ribosome stalling during cotranslational translocation at the endoplasmic reticulum. Involved in reticulophagy in response to endoplasmic reticulum stress by mediating ufmylation of proteins such as CYB5R3 and RPN1, thereby promoting lysosomal degradation of ufmylated proteins. Ufmylation in response to endoplasmic reticulum stress is essential for processes such as hematopoiesis, blood vessel morphogenesis or inflammatory response. Mediates ufmylation of DDRGK1 and CDK5RAP3; the role of these modifications is however unclear: as both DDRGK1 and CDK5RAP3 act as substrate adapters for ufmylation, it is uncertain whether ufmylation of these proteins is, a collateral effect or is required for ufmylation. Acts as a negative regulator of T-cell activation by mediating ufmylation and stabilization of PDCD1/PD-1. Also involved in the response to DNA damage: recruited to double-strand break sites following DNA damage and mediates monoufmylation of histone H4 and ufmylation of MRE11. Mediates ufmylation of TP53/p53, promoting its stability. Catalyzes ufmylation of TRIP4, thereby playing a role in nuclear receptor-mediated transcription. Required for hematopoietic stem cell function and hematopoiesis. This Macaca fascicularis (Crab-eating macaque) protein is E3 UFM1-protein ligase 1.